A 200-amino-acid polypeptide reads, in one-letter code: Phospholipase A2 inhibitor gamma subunit B (200 aa).

The N-terminal stretch at 1 to 19 (MKFLLFCCLFGTFLATGMC) is a signal peptide. 8 disulfides stabilise this stretch: cysteine 22-cysteine 46, cysteine 25-cysteine 32, cysteine 39-cysteine 67, cysteine 73-cysteine 94, cysteine 95-cysteine 100, cysteine 120-cysteine 145, cysteine 138-cysteine 165, and cysteine 171-cysteine 191. A glycan (N-linked (GlcNAc...) asparagine) is linked at asparagine 31.

It belongs to the CNF-like-inhibitor family. As to quaternary structure, heterodimer of subunit A and subunit B. In terms of processing, N-glycosylated. In terms of tissue distribution, expressed by the liver. Not expressed in esophagus, stomach, pancreas, spleen, gall bladder, small intestine, rectum, kidney, trachea, lung, testis and body fat.

The protein localises to the secreted. Functionally, inhibits the enzymatic activity of phospholipase A2 (PA2). In Elaphe quadrivirgata (Japanese four-lined ratsnake), this protein is Phospholipase A2 inhibitor gamma subunit B.